The sequence spans 380 residues: Alkanesulfonate monooxygenase (380 aa).

Belongs to the SsuD family. As to quaternary structure, homotetramer.

The catalysed reaction is an alkanesulfonate + FMNH2 + O2 = an aldehyde + FMN + sulfite + H2O + 2 H(+). In terms of biological role, catalyzes the desulfonation of aliphatic sulfonates. In Pectobacterium atrosepticum (strain SCRI 1043 / ATCC BAA-672) (Erwinia carotovora subsp. atroseptica), this protein is Alkanesulfonate monooxygenase.